The primary structure comprises 336 residues: NADH-quinone oxidoreductase subunit H (336 aa).

8 consecutive transmembrane segments (helical) span residues 4-24 (YILW…LVVA), 75-95 (YLFF…WAVI), 108-128 (LGLL…VIAG), 154-174 (MGFA…TGII), 181-201 (LWHW…IAGI), 233-253 (LFFL…SIMF), 272-292 (FVPG…MFLW), and 308-328 (LGWK…ACMV).

It belongs to the complex I subunit 1 family. In terms of assembly, NDH-1 is composed of 14 different subunits. Subunits NuoA, H, J, K, L, M, N constitute the membrane sector of the complex.

It is found in the cell inner membrane. The enzyme catalyses a quinone + NADH + 5 H(+)(in) = a quinol + NAD(+) + 4 H(+)(out). In terms of biological role, NDH-1 shuttles electrons from NADH, via FMN and iron-sulfur (Fe-S) centers, to quinones in the respiratory chain. The immediate electron acceptor for the enzyme in this species is believed to be ubiquinone. Couples the redox reaction to proton translocation (for every two electrons transferred, four hydrogen ions are translocated across the cytoplasmic membrane), and thus conserves the redox energy in a proton gradient. This subunit may bind ubiquinone. This chain is NADH-quinone oxidoreductase subunit H, found in Francisella philomiragia subsp. philomiragia (strain ATCC 25017 / CCUG 19701 / FSC 153 / O#319-036).